Consider the following 419-residue polypeptide: Serine hydroxymethyltransferase (419 aa).

(6S)-5,6,7,8-tetrahydrofolate contacts are provided by residues Leu121 and 125 to 127; that span reads GHL. Lys230 is modified (N6-(pyridoxal phosphate)lysine). 355–357 contributes to the (6S)-5,6,7,8-tetrahydrofolate binding site; sequence SPF.

This sequence belongs to the SHMT family. Homodimer. Pyridoxal 5'-phosphate is required as a cofactor.

Its subcellular location is the cytoplasm. The enzyme catalyses (6R)-5,10-methylene-5,6,7,8-tetrahydrofolate + glycine + H2O = (6S)-5,6,7,8-tetrahydrofolate + L-serine. It participates in one-carbon metabolism; tetrahydrofolate interconversion. It functions in the pathway amino-acid biosynthesis; glycine biosynthesis; glycine from L-serine: step 1/1. In terms of biological role, catalyzes the reversible interconversion of serine and glycine with tetrahydrofolate (THF) serving as the one-carbon carrier. This reaction serves as the major source of one-carbon groups required for the biosynthesis of purines, thymidylate, methionine, and other important biomolecules. Also exhibits THF-independent aldolase activity toward beta-hydroxyamino acids, producing glycine and aldehydes, via a retro-aldol mechanism. In Streptococcus equi subsp. equi (strain 4047), this protein is Serine hydroxymethyltransferase.